The primary structure comprises 116 residues: Large ribosomal subunit protein bL20 (116 aa).

The protein belongs to the bacterial ribosomal protein bL20 family.

Its function is as follows. Binds directly to 23S ribosomal RNA and is necessary for the in vitro assembly process of the 50S ribosomal subunit. It is not involved in the protein synthesizing functions of that subunit. This is Large ribosomal subunit protein bL20 from Mycoplasmopsis pulmonis (strain UAB CTIP) (Mycoplasma pulmonis).